Consider the following 101-residue polypeptide: Small ribosomal subunit protein uS14 (101 aa).

Positions 1–10 are enriched in basic and acidic residues; sequence MAKKSAIEKN. A disordered region spans residues 1–23; that stretch reads MAKKSAIEKNNRRKKMTKNAAPK. The segment covering 11–23 has biased composition (basic residues); it reads NRRKKMTKNAAPK.

Part of the 30S ribosomal subunit. Contacts proteins S3 and S10.

Functionally, binds 16S rRNA, required for the assembly of 30S particles and may also be responsible for determining the conformation of the 16S rRNA at the A site. The polypeptide is Small ribosomal subunit protein uS14 (Rhodopseudomonas palustris (strain ATCC BAA-98 / CGA009)).